Here is a 348-residue protein sequence, read N- to C-terminus: 4-hydroxy-3-methylbut-2-en-1-yl diphosphate synthase (flavodoxin) (348 aa).

Cys-263, Cys-266, Cys-298, and Glu-305 together coordinate [4Fe-4S] cluster.

Belongs to the IspG family. Requires [4Fe-4S] cluster as cofactor.

The catalysed reaction is (2E)-4-hydroxy-3-methylbut-2-enyl diphosphate + oxidized [flavodoxin] + H2O + 2 H(+) = 2-C-methyl-D-erythritol 2,4-cyclic diphosphate + reduced [flavodoxin]. It participates in isoprenoid biosynthesis; isopentenyl diphosphate biosynthesis via DXP pathway; isopentenyl diphosphate from 1-deoxy-D-xylulose 5-phosphate: step 5/6. In terms of biological role, converts 2C-methyl-D-erythritol 2,4-cyclodiphosphate (ME-2,4cPP) into 1-hydroxy-2-methyl-2-(E)-butenyl 4-diphosphate. The protein is 4-hydroxy-3-methylbut-2-en-1-yl diphosphate synthase (flavodoxin) of Dehalococcoides mccartyi (strain ATCC BAA-2100 / JCM 16839 / KCTC 5957 / BAV1).